A 491-amino-acid polypeptide reads, in one-letter code: AP-2 complex subunit mu (491 aa).

A phosphoserine mark is found at serine 179, serine 180, and serine 181. The region spanning 209-490 (KDEVFLYVNE…ISKAGSYEVR (282 aa)) is the MHD domain.

This sequence belongs to the adaptor complexes medium subunit family. As to quaternary structure, adaptor protein complex 2 (AP-2) is a heterotetramer composed of two large adaptins (alpha-type subunit APL3 and beta-type subunit APL1), a medium chain (mu-type subunit APM4) and a small adaptin (sigma-type subunit APS2).

It is found in the membrane. The protein resides in the clathrin-coated pit. The protein localises to the cytoplasmic vesicle. It localises to the clathrin-coated vesicle membrane. Component of the adaptor complexes which link clathrin to receptors in coated vesicles. Clathrin-associated protein complexes are believed to interact with the cytoplasmic tails of membrane proteins, leading to their selection and concentration. The chain is AP-2 complex subunit mu (APM4) from Saccharomyces cerevisiae (strain ATCC 204508 / S288c) (Baker's yeast).